Reading from the N-terminus, the 342-residue chain is Serine/threonine-protein kinase ISR1 (342 aa).

The Protein kinase domain maps to 59-342 (WRLTRVLGCG…SNARVAEHAF (284 aa)). ATP contacts are provided by residues 65–73 (LGCGSVACV) and Lys-84. Asp-190 serves as the catalytic Proton acceptor.

This sequence belongs to the protein kinase superfamily. Ser/Thr protein kinase family.

It catalyses the reaction L-seryl-[protein] + ATP = O-phospho-L-seryl-[protein] + ADP + H(+). The catalysed reaction is L-threonyl-[protein] + ATP = O-phospho-L-threonyl-[protein] + ADP + H(+). Functionally, probable serine/threonine protein kinase which may function redundantly with MPK1-independent branch of the PCK1 pathway. In Eremothecium gossypii (strain ATCC 10895 / CBS 109.51 / FGSC 9923 / NRRL Y-1056) (Yeast), this protein is Serine/threonine-protein kinase ISR1 (ISR1).